Reading from the N-terminus, the 614-residue chain is Vitamin B12 transporter BtuB (614 aa).

A signal peptide spans Met-1–Ala-20. Positions Asp-26–Asn-33 match the TonB box motif. A TBDR plug domain is found at Pro-38 to Thr-152. Cyanocob(III)alamin-binding positions include Ser-85, Asn-92, and Val-110–Ser-111. Positions Asn-155–Phe-614 constitute a TBDR beta-barrel domain. A run of 3 beta stranded transmembrane segments spans residues Thr-158–Gly-165, Tyr-169–Gln-178, and Thr-184–Thr-195. Positions 199, 211, 213, and 215 each coordinate Ca(2+). Beta stranded transmembrane passes span Phe-217 to Glu-227 and Asp-232 to Asp-248. Ca(2+) contacts are provided by Tyr-249 and Asp-250. Residue Ala-251 coordinates cyanocob(III)alamin. Asp-261 contributes to the Ca(2+) binding site. 14 beta stranded membrane-spanning segments follow: residues Arg-263–Asn-277, Glu-279–Asn-296, Thr-309–Val-325, His-328–Trp-337, Tyr-353–Gly-369, Phe-371–Asp-381, Phe-385–Ile-400, Tyr-403–Asn-417, Lys-434–Glu-443, Val-449–Asn-458, Tyr-473–Phe-490, Pro-494–Ala-509, Arg-517–Trp-529, and Asp-535–Asp-550. Thr-309 provides a ligand contact to cyanocob(III)alamin. Arg-517 is a cyanocob(III)alamin binding site. Cyanocob(III)alamin is bound at residue Tyr-551. 3 beta stranded membrane passes run Thr-558 to Ala-572, Ile-585 to Val-596, and Ala-602 to Phe-614. The TonB C-terminal box motif lies at Tyr-597–Phe-614.

The protein belongs to the TonB-dependent receptor family. BtuB (TC 1.B.14.3.1) subfamily.

The protein resides in the cell outer membrane. Its function is as follows. Involved in the active translocation of vitamin B12 (cyanocobalamin) across the outer membrane to the periplasmic space. It derives its energy for transport by interacting with the trans-periplasmic membrane protein TonB. The polypeptide is Vitamin B12 transporter BtuB (Salmonella typhimurium (strain LT2 / SGSC1412 / ATCC 700720)).